The following is a 93-amino-acid chain: Acylphosphatase (93 aa).

Residues 6-93 form the Acylphosphatase-like domain; it reads RAIVTVKGLV…GEFDTFDVRY (88 aa). Residues Arg21 and Asn39 contribute to the active site.

The protein belongs to the acylphosphatase family.

The enzyme catalyses an acyl phosphate + H2O = a carboxylate + phosphate + H(+). The chain is Acylphosphatase (acyP) from Geobacter metallireducens (strain ATCC 53774 / DSM 7210 / GS-15).